The primary structure comprises 368 residues: Ribosomal RNA large subunit methyltransferase M (368 aa).

S-adenosyl-L-methionine contacts are provided by residues Ser-192, 225-228 (APGG), Asp-244, Asp-264, and Asp-281. The active-site Proton acceptor is the Lys-310.

The protein belongs to the class I-like SAM-binding methyltransferase superfamily. RNA methyltransferase RlmE family. RlmM subfamily. As to quaternary structure, monomer.

It is found in the cytoplasm. The catalysed reaction is cytidine(2498) in 23S rRNA + S-adenosyl-L-methionine = 2'-O-methylcytidine(2498) in 23S rRNA + S-adenosyl-L-homocysteine + H(+). Functionally, catalyzes the 2'-O-methylation at nucleotide C2498 in 23S rRNA. The sequence is that of Ribosomal RNA large subunit methyltransferase M from Colwellia psychrerythraea (strain 34H / ATCC BAA-681) (Vibrio psychroerythus).